Consider the following 166-residue polypeptide: Large ribosomal subunit protein bL19 (166 aa).

The protein belongs to the bacterial ribosomal protein bL19 family.

Its function is as follows. This protein is located at the 30S-50S ribosomal subunit interface and may play a role in the structure and function of the aminoacyl-tRNA binding site. This chain is Large ribosomal subunit protein bL19, found in Chelativorans sp. (strain BNC1).